The following is a 186-amino-acid chain: Allergen Fel d 4 (186 aa).

Residues 1–15 (MKLLLLCLGLILVCA) form the signal peptide. Asn-51 and Asn-66 each carry an N-linked (GlcNAc...) asparagine glycan. Cys-81 and Cys-171 form a disulfide bridge.

Belongs to the calycin superfamily. Lipocalin family. In terms of tissue distribution, abundant in urine (at protein level).

It localises to the secreted. Functionally, may be a pheromone carrier. Acts as a kairomone, detected by the prey vomeronasal organ and inducing fear reactions in mice. In Felis catus (Cat), this protein is Allergen Fel d 4.